The primary structure comprises 293 residues: tRNA pseudouridine synthase B (293 aa).

Residue aspartate 39 is the Nucleophile of the active site.

This sequence belongs to the pseudouridine synthase TruB family. Type 1 subfamily.

It carries out the reaction uridine(55) in tRNA = pseudouridine(55) in tRNA. Functionally, responsible for synthesis of pseudouridine from uracil-55 in the psi GC loop of transfer RNAs. This is tRNA pseudouridine synthase B from Thermobifida fusca (strain YX).